The chain runs to 251 residues: Pyrroloquinoline-quinone synthase (251 aa).

Belongs to the PqqC family.

It carries out the reaction 6-(2-amino-2-carboxyethyl)-7,8-dioxo-1,2,3,4,7,8-hexahydroquinoline-2,4-dicarboxylate + 3 O2 = pyrroloquinoline quinone + 2 H2O2 + 2 H2O + H(+). It participates in cofactor biosynthesis; pyrroloquinoline quinone biosynthesis. Its function is as follows. Ring cyclization and eight-electron oxidation of 3a-(2-amino-2-carboxyethyl)-4,5-dioxo-4,5,6,7,8,9-hexahydroquinoline-7,9-dicarboxylic-acid to PQQ. The polypeptide is Pyrroloquinoline-quinone synthase (Klebsiella pneumoniae (strain 342)).